A 399-amino-acid polypeptide reads, in one-letter code: Argininosuccinate synthase (399 aa).

Position 9–17 (9–17) interacts with ATP; sequence AYSGGLDTS. Tyr-85 contacts L-citrulline. Gly-115 is an ATP binding site. Thr-117, Asn-121, and Asp-122 together coordinate L-aspartate. Asn-121 is an L-citrulline binding site. Residues Arg-125, Ser-173, Glu-258, and Tyr-270 each contribute to the L-citrulline site.

The protein belongs to the argininosuccinate synthase family. Type 1 subfamily. As to quaternary structure, homotetramer.

The protein localises to the cytoplasm. The catalysed reaction is L-citrulline + L-aspartate + ATP = 2-(N(omega)-L-arginino)succinate + AMP + diphosphate + H(+). The protein operates within amino-acid biosynthesis; L-arginine biosynthesis; L-arginine from L-ornithine and carbamoyl phosphate: step 2/3. The chain is Argininosuccinate synthase from Streptococcus uberis (strain ATCC BAA-854 / 0140J).